A 452-amino-acid chain; its full sequence is GTPase Der (452 aa).

EngA-type G domains follow at residues 4–169 (PIVA…PTTE) and 177–352 (IKVA…ASHR). GTP contacts are provided by residues 10–17 (GRPNVGKS), 57–61 (DTGGL), 120–123 (NKCE), 183–190 (GRPNVGKS), 230–234 (DTAGI), and 295–298 (NKWD). The KH-like domain maps to 353-438 (RRVSTAVINE…PIRLIWRGKS (86 aa)).

This sequence belongs to the TRAFAC class TrmE-Era-EngA-EngB-Septin-like GTPase superfamily. EngA (Der) GTPase family. In terms of assembly, associates with the 50S ribosomal subunit.

Its function is as follows. GTPase that plays an essential role in the late steps of ribosome biogenesis. The protein is GTPase Der of Gloeothece citriformis (strain PCC 7424) (Cyanothece sp. (strain PCC 7424)).